The following is a 202-amino-acid chain: Transcriptional regulator GfcR 2 (202 aa).

Belongs to the purine/pyrimidine phosphoribosyltransferase family. GfcR subfamily.

The sequence is that of Transcriptional regulator GfcR 2 from Methanosarcina barkeri (strain Fusaro / DSM 804).